A 1103-amino-acid polypeptide reads, in one-letter code: Kinesin-like protein KIF1C (1103 aa).

Residues 5–348 (SVKVAVRVRP…LRYADRTKQI (344 aa)) form the Kinesin motor domain. 97 to 104 (GQTGAGKS) serves as a coordination point for ATP. Serine 295 carries the post-translational modification Phosphoserine. Coiled-coil stretches lie at residues 359–388 (NARLIRELQEEVARLRELLMAQGLSASALE) and 438–479 (EEAM…LAEM). The disordered stretch occupies residues 400–438 (ALPAVSSPPAPVSPSSPTTHNGELEPSFSPNTESQIGPE). Phosphoserine is present on serine 494. The FHA domain maps to 523-590 (TRVGQVDMDI…LKSGNRIVMG (68 aa)). Residues 633–674 (EQQGIDIKLEMEKRLQDLENQYRKEKEEADLLLEQQRLYADS) adopt a coiled-coil conformation. Phosphoserine is present on residues serine 674 and serine 676. Disordered stretches follow at residues 808–828 (GEEEGGGAGSGGGSEEGARGA), 874–924 (LAQD…WERV), and 950–1103 (QGLQ…GAAV). The segment covering 813 to 822 (GGAGSGGGSE) has biased composition (gly residues). Residues 828 to 872 (AEVEDLRAHIDKLTGILQEVKLQNSSKDRELQALRDRMLRMERVI) are a coiled coil. Positions 893–910 (PEGSEAAEEAAPSDRMPS) are enriched in low complexity. The residue at position 915 (serine 915) is a Phosphoserine. The span at 953–962 (QGSGGRGGGL) shows a compositional bias: gly residues. Residues 1021-1031 (PSPRRSHHPRR) are compositionally biased toward basic residues. Phosphoserine is present on serine 1033. Arginine 1041 is subject to Omega-N-methylarginine. Residues 1062–1083 (PQPPQPYPAQRPPGPRYPPYTT) are compositionally biased toward pro residues. Threonine 1083 carries the post-translational modification Phosphothreonine. Serine 1092 bears the Phosphoserine mark. Basic and acidic residues predominate over residues 1092–1103 (SAPDLKESGAAV).

It belongs to the TRAFAC class myosin-kinesin ATPase superfamily. Kinesin family. Unc-104 subfamily. As to quaternary structure, monomer. Interacts with BICD2. Phosphorylated on tyrosine residues. As to expression, expressed in all tissues examined, with most abundant expression in heart and skeletal muscle.

It localises to the cytoplasm. The protein resides in the cytoskeleton. Functionally, motor required for the retrograde transport of Golgi vesicles to the endoplasmic reticulum. Has a microtubule plus end-directed motility. The polypeptide is Kinesin-like protein KIF1C (KIF1C) (Homo sapiens (Human)).